Consider the following 280-residue polypeptide: Pantothenate synthetase (280 aa).

32 to 39 (MGALHAGH) provides a ligand contact to ATP. Histidine 39 serves as the catalytic Proton donor. Glutamine 63 serves as a coordination point for (R)-pantoate. Glutamine 63 contributes to the beta-alanine binding site. 149–152 (GEKD) serves as a coordination point for ATP. (R)-pantoate is bound at residue glutamine 155. ATP is bound by residues valine 178 and 186–189 (MSSR).

Belongs to the pantothenate synthetase family. Homodimer.

It is found in the cytoplasm. It carries out the reaction (R)-pantoate + beta-alanine + ATP = (R)-pantothenate + AMP + diphosphate + H(+). Its pathway is cofactor biosynthesis; (R)-pantothenate biosynthesis; (R)-pantothenate from (R)-pantoate and beta-alanine: step 1/1. Catalyzes the condensation of pantoate with beta-alanine in an ATP-dependent reaction via a pantoyl-adenylate intermediate. The protein is Pantothenate synthetase of Ruegeria sp. (strain TM1040) (Silicibacter sp.).